Consider the following 239-residue polypeptide: Geranylgeranylglyceryl phosphate synthase (239 aa).

Mg(2+) is bound by residues D18 and S45. Sn-glycerol 1-phosphate contacts are provided by residues 166-172 (YLEAGSG), 197-198 (GG), and 219-220 (GT).

The protein belongs to the GGGP/HepGP synthase family. Group II subfamily. Mg(2+) serves as cofactor.

It is found in the cytoplasm. The enzyme catalyses sn-glycerol 1-phosphate + (2E,6E,10E)-geranylgeranyl diphosphate = sn-3-O-(geranylgeranyl)glycerol 1-phosphate + diphosphate. Its pathway is membrane lipid metabolism; glycerophospholipid metabolism. Prenyltransferase that catalyzes the transfer of the geranylgeranyl moiety of geranylgeranyl diphosphate (GGPP) to the C3 hydroxyl of sn-glycerol-1-phosphate (G1P). This reaction is the first ether-bond-formation step in the biosynthesis of archaeal membrane lipids. In Pyrobaculum islandicum (strain DSM 4184 / JCM 9189 / GEO3), this protein is Geranylgeranylglyceryl phosphate synthase.